The primary structure comprises 153 residues: Transcriptional repressor NrdR (153 aa).

The segment at 3–34 is a zinc-finger region; it reads CPFCNHLHDKVVDSRESKEGDAIRRRRECLEC. The ATP-cone domain maps to 49–139; that stretch reads YMVVKKDGRR…VYRDFQDEQA (91 aa).

Belongs to the NrdR family. The cofactor is Zn(2+).

Negatively regulates transcription of bacterial ribonucleotide reductase nrd genes and operons by binding to NrdR-boxes. In Solibacter usitatus (strain Ellin6076), this protein is Transcriptional repressor NrdR.